The chain runs to 508 residues: Mu-like prophage FluMu protein gp28 (508 aa).

This sequence to phage Mu protein gp28.

This Haemophilus influenzae (strain ATCC 51907 / DSM 11121 / KW20 / Rd) protein is Mu-like prophage FluMu protein gp28.